Reading from the N-terminus, the 134-residue chain is MIIGIGSDLIDIRRVEKSIERFGERFTHRCFTEIERARSDRRANRAESYAKRFAAKEACSKALGTGLAQGVFWKDMGVVNLPSGKPTMVLSGGAAVILESMLPAGHRAAIHLTITDDYPLAQAFVIIEALPESL.

Positions 8 and 57 each coordinate Mg(2+).

This sequence belongs to the P-Pant transferase superfamily. AcpS family. The cofactor is Mg(2+).

Its subcellular location is the cytoplasm. It catalyses the reaction apo-[ACP] + CoA = holo-[ACP] + adenosine 3',5'-bisphosphate + H(+). In terms of biological role, transfers the 4'-phosphopantetheine moiety from coenzyme A to a Ser of acyl-carrier-protein. The polypeptide is Holo-[acyl-carrier-protein] synthase (Rhizobium etli (strain CIAT 652)).